The sequence spans 1274 residues: MPRVVLNGVTVDFPFQPYPCQQEYMTKVLECLQKKVNGILESPTGTGKTLCLLCTTLAWREHLRDAVSSLKIAERVQGELFASRTLSSWRSAADANGDSIDCYTDIPKIIYASRTHSQLTQVIGELRNTSYRPKVCVLGSREQLCIHPEVKKQESNHMQISLCRKKVASRSCHFYNNVEEKSLEQELATPILDIEDLVKNGSKHKVCPYYLSRNLKQQADIIFMPYNYLLDAKSRKAHNIDLKGTVVIFDEAHNVEKICEESASFDLTPRDVASGLEVINQVLEEQARVAQHGELQQEFIIDTSSSGLNMELEDIAKLKMILLHLEEAIDAVQLPGDDRGVTKPGSYIFELFAEAQITFQTKGCILESLDQIIQHLTGRTGVFTNTAGLQKLMDIIQIVFSVDPLEGSPGSQVGLGSSHFYKVHIHPETSHRRAAQRSDAWSTTASRKQGKVLSYWCFSPSHSMRELVQQGVRTLILTSGTLAPLSSFALEMQIPFPVCLENPHIIDKNQLWVGVIPRGPDGVQLSSAYDKRFSEECLSSLGKALGNIARVVPHGLLVFFPSYPVMEKSLEFWQAQGMSKKVEALKPLFVEPRNKGSFSEVIDAYYQQVASPGSNGATFLAVCRGKASEGLDFSDMNGRGVIVTGLPYPPRMDPRVILKMQFLDEMKGRSRVGGQCLSGQEWYQQQASRAVNQAIGRVIRHRHDYGAIFLCDHRFAYADARAHLPSWVRPYLKVYDNFGRVIRDVAQFFRVAQKAMPLPVPQAVTSSVSEGEAAVKEATLSSHSLSTRKAMSLDVHVPSLRRRPVGLPTAGDSESSVCVEYEQQTFSAQKRPMGLLAALEYNEQKAGASEEQALSSSTPSLRCEKRLSVEQRGGKKKVRLVNHPEEPVAGTQAGRAKMFMVAVKQALSQANFDTFTQALQHYKSSDDFEALVASLTCLFAEDPKKHTLLKGFYQFVRPHHKQQFEDICFQLTGQRCSYQPGNSLPFGEQAQSTASKQGRRELESKLTLSEGADRQLDPGEHLNQGWPHLSTHLTSKGDTSNCPKVGCVGEKPGQPAVNDYLSDVHKALGSASCNQLTAALRAYKQDDDLDKVLAVVAALTTAKPEHLSLLQRFGMFIRRHHKPRFVQTCADLMGLPTIGKGLELPCPRDESTTVPSELTHEDMKPGPSTSKKPEKTQSKISSFLRQRPDQSARSDDTIMQLPPRLPPEHTTSQWNFVCPACATEDTVLFQCPSCDFCRCRACWQRQLQASRLCPACGAVNRKQSIAQVIWPKPQ.

One can recognise a Helicase ATP-binding domain in the interval 7 to 296 (NGVTVDFPFQ…ARVAQHGELQ (290 aa)). 42-49 (SPTGTGKT) lines the ATP pocket. [4Fe-4S] cluster contacts are provided by C145, C163, C172, and C207. The Nuclear localization signal signature appears at 151 to 167 (KKQESNHMQISLCRKKV). Residues 250–253 (DEAH) carry the DEAH box motif. The short motif at 871–877 (QRGGKKK) is the Nuclear localization signal element. Disordered regions lie at residues 982–1002 (NSLP…RREL), 1014–1038 (RQLD…SKGD), and 1143–1198 (ELPC…DDTI). A compositionally biased stretch (basic and acidic residues) spans 1186 to 1196 (QRPDQSARSDD).

This sequence belongs to the helicase family. RAD3/XPD subfamily. In terms of assembly, interacts with TERF1. Interacts (via PIP-box) with PCNA; the interaction is direct and essential for suppressing telomere fragility. Interacts with MMS19; the interaction mediates the association of RTEL1 with the cytosolic iron-sulfur protein assembly (CIA) complex.

It localises to the nucleus. It carries out the reaction ATP + H2O = ADP + phosphate + H(+). Its function is as follows. A probable ATP-dependent DNA helicase implicated in telomere-length regulation, DNA repair and the maintenance of genomic stability. Acts as an anti-recombinase to counteract toxic recombination and limit crossover during meiosis. Regulates meiotic recombination and crossover homeostasis by physically dissociating strand invasion events and thereby promotes noncrossover repair by meiotic synthesis dependent strand annealing (SDSA) as well as disassembly of D loop recombination intermediates. Also disassembles T loops and prevents telomere fragility by counteracting telomeric G4-DNA structures, which together ensure the dynamics and stability of the telomere. This is Regulator of telomere elongation helicase 1 (Rtel1) from Rattus norvegicus (Rat).